We begin with the raw amino-acid sequence, 93 residues long: 3-isopropylmalate dehydratase small subunit (93 aa).

The protein belongs to the LeuD family. LeuD type 1 subfamily. In terms of assembly, heterodimer of LeuC and LeuD.

The enzyme catalyses (2R,3S)-3-isopropylmalate = (2S)-2-isopropylmalate. It participates in amino-acid biosynthesis; L-leucine biosynthesis; L-leucine from 3-methyl-2-oxobutanoate: step 2/4. In terms of biological role, catalyzes the isomerization between 2-isopropylmalate and 3-isopropylmalate, via the formation of 2-isopropylmaleate. The protein is 3-isopropylmalate dehydratase small subunit (leuD) of Actinoplanes teichomyceticus.